The following is a 1251-amino-acid chain: ATP-dependent helicase/nuclease subunit A (1251 aa).

The UvrD-like helicase ATP-binding domain maps to 5 to 481 (TKWTDEQWEA…IILSRNFRSR (477 aa)). 26 to 33 (AAAGAGKT) lines the ATP pocket. Residues 526 to 824 (TVGGEVEFHL…RIMSIHKSKG (299 aa)) enclose the UvrD-like helicase C-terminal domain. Residues 544–565 (NFTFENEGEEGRQADEGEEDEE) form a disordered region.

The protein belongs to the helicase family. AddA subfamily. As to quaternary structure, heterodimer of AddA and AddB/RexB. Requires Mg(2+) as cofactor.

It catalyses the reaction Couples ATP hydrolysis with the unwinding of duplex DNA by translocating in the 3'-5' direction.. The enzyme catalyses ATP + H2O = ADP + phosphate + H(+). The heterodimer acts as both an ATP-dependent DNA helicase and an ATP-dependent, dual-direction single-stranded exonuclease. Recognizes the chi site generating a DNA molecule suitable for the initiation of homologous recombination. The AddA nuclease domain is required for chi fragment generation; this subunit has the helicase and 3' -&gt; 5' nuclease activities. In Acetivibrio thermocellus (strain ATCC 27405 / DSM 1237 / JCM 9322 / NBRC 103400 / NCIMB 10682 / NRRL B-4536 / VPI 7372) (Clostridium thermocellum), this protein is ATP-dependent helicase/nuclease subunit A.